A 688-amino-acid polypeptide reads, in one-letter code: Eukaryotic translation initiation factor 3 subunit B (688 aa).

The segment at 1–43 (MLESERPERDMEEEGEESNEEEEEEGMSFSDPEGFEDDISDEE) is disordered. 2 stretches are compositionally biased toward acidic residues: residues 10 to 26 (DMEE…EEEG) and 33 to 43 (EGFEDDISDEE). Residues 61 to 144 (SVIVVDNVPQ…HTFRVNLFTD (84 aa)) enclose the RRM domain. WD repeat units follow at residues 164-206 (KDFG…VPVE), 208-246 (RARW…QIQR), 248-293 (SHQG…NKRG), 297-335 (ESSA…LLDK), 338-373 (LKIT…TLMQ), 436-492 (EMKD…TIFW), 525-570 (AEHY…LQKN), and 635-680 (TYRE…FFVT). Residues 589 to 640 (SQDQIKQIKKDLKKYSKIFEQKDRLSQTKASKELIERRRAMMEEYKTYREMA) adopt a coiled-coil conformation.

Belongs to the eIF-3 subunit B family. As to quaternary structure, component of the eukaryotic translation initiation factor 3 (eIF-3) complex, which is composed of 13 subunits: eif3a, eif3b, eif3c, eif3d, eif3e, eif3f, eif3g, eif3h, eif3i, eif3j, eif3k, eif3l and eif3m.

Its subcellular location is the cytoplasm. The protein resides in the stress granule. In terms of biological role, RNA-binding component of the eukaryotic translation initiation factor 3 (eIF-3) complex, which is involved in protein synthesis of a specialized repertoire of mRNAs and, together with other initiation factors, stimulates binding of mRNA and methionyl-tRNAi to the 40S ribosome. The eIF-3 complex specifically targets and initiates translation of a subset of mRNAs involved in cell proliferation. This is Eukaryotic translation initiation factor 3 subunit B (eif3b) from Xenopus laevis (African clawed frog).